A 93-amino-acid polypeptide reads, in one-letter code: Cytochrome c oxidase polypeptide 6, mitochondrial (93 aa).

Over 2–33 (STGNESYNLRYPKGFKGYPYNMYKLEGYGTPK) the chain is Mitochondrial matrix. Residues 34–53 (GYITLIGVVATLTVSGLFFA) form a helical membrane-spanning segment. The Mitochondrial intermembrane portion of the chain corresponds to 54–93 (KTRSNKREYPTHNKEWRAKTLAYAKETNADPIYQLPKDKI).

It belongs to the cytochrome c oxidase IV family. As to quaternary structure, component of the cytochrome c oxidase (complex IV, CIV), a multisubunit enzyme composed of a catalytic core of 3 subunits and seevral supernumerary subunits. The complex exists as a monomer or a dimer and forms supercomplexes (SCs) in the inner mitochondrial membrane with ubiquinol-cytochrome c oxidoreductase (cytochrome b-c1 complex, complex III, CIII).

The protein localises to the mitochondrion inner membrane. Its pathway is energy metabolism; oxidative phosphorylation. Component of the cytochrome c oxidase, the last enzyme in the mitochondrial electron transport chain which drives oxidative phosphorylation. The respiratory chain contains 3 multisubunit complexes succinate dehydrogenase (complex II, CII), ubiquinol-cytochrome c oxidoreductase (cytochrome b-c1 complex, complex III, CIII) and cytochrome c oxidase (complex IV, CIV), that cooperate to transfer electrons derived from NADH and succinate to molecular oxygen, creating an electrochemical gradient over the inner membrane that drives transmembrane transport and the ATP synthase. Cytochrome c oxidase is the component of the respiratory chain that catalyzes the reduction of oxygen to water. Electrons originating from reduced cytochrome c in the intermembrane space (IMS) are transferred via the dinuclear copper A center (CU(A)) of subunit 2 and heme A of subunit 1 to the active site in subunit 1, a binuclear center (BNC) formed by heme A3 and copper B (CU(B)). The BNC reduces molecular oxygen to 2 water molecules using 4 electrons from cytochrome c in the IMS and 4 protons from the mitochondrial matrix. The chain is Cytochrome c oxidase polypeptide 6, mitochondrial (cxfA) from Dictyostelium discoideum (Social amoeba).